The following is a 355-amino-acid chain: Cyclic nucleotide-gated potassium channel mll3241 (355 aa).

Residues 1–12 are Cytoplasmic-facing; it reads MSVLPFLRIYAP. Residues 13–30 form a helical membrane-spanning segment; it reads LNAVLAAPGLLAVAALTI. Topologically, residues 31 to 38 are periplasmic; the sequence is PDMSGRSR. The helical transmembrane segment at 39 to 61 threads the bilayer; sequence LALAALLAVIWGAYLLQLAATLL. Residues 62–74 lie on the Cytoplasmic side of the membrane; that stretch reads KRRAGVVRDRTPK. A helical transmembrane segment spans residues 75-94; that stretch reads IAIDVLAVLVPLAAFLLDGS. Residues 95–112 traverse the membrane as a helical segment; the sequence is PDWSLYCAVWLLKPLRDS. The Cytoplasmic segment spans residues 113–129; the sequence is TFFPVLGRVLANEARNL. A helical transmembrane segment spans residues 130–150; the sequence is IGVTTLFGVVLFAVALAAYVI. The Periplasmic segment spans residues 151 to 161; that stretch reads ERDIQPEKFGS. The segment at residues 162–180 is an intramembrane region (pore-forming); the sequence is IPQAMWWAVVTLSTTGYGD. Positions 175–180 match the Selectivity filter motif; the sequence is TTGYGD. The Periplasmic portion of the chain corresponds to 181 to 185; the sequence is TIPQS. Residues 186–210 form a helical membrane-spanning segment; the sequence is FAGRVLAGAVMMSGIGIFGLWAGIL. The Cytoplasmic portion of the chain corresponds to 211 to 355; the sequence is ATGFYQEVRR…LERRGAAASA (145 aa). 3',5'-cyclic AMP-binding positions include 297–298, 307–308, and Arg348; these read GE and RS.

It belongs to the potassium channel family. Homotetramer.

It localises to the cell membrane. Functionally, cyclic nucleotide-regulated potassium channel activated by cAMP. In Mesorhizobium japonicum (strain LMG 29417 / CECT 9101 / MAFF 303099) (Mesorhizobium loti (strain MAFF 303099)), this protein is Cyclic nucleotide-gated potassium channel mll3241.